Here is a 507-residue protein sequence, read N- to C-terminus: MAVCARLCGVGPARGCRRRQQRRGPAETAAADSEADTDPEEERIEAGPARCSLLELPPELLVEIFASLPGTDLPSLAQVCSRFRRILHTDTIWRRRCREEYGVCENLRKLEITGVSCRDVYAKLLHRYRHILGLWQPDIGPYGGLLNVVVDGLFIIGWMYLPPHDPHVGDPMRFKPLFRIHLMERKSATVECMYGHKGPHNGHIQIVKRDEFSTKCNQTDHHRMSGGRQEEFRTWLREEWGRTLEDIFHEHMQELILMKFIYTSQYDNCLTYRRIYLPPSHPDDLIKPGLFKGTYGSHGLEIVMLSFHGSRARGTKITGDPNIPAGQQTVEIDLQRRIQLPDVENLRNFNELSRIVLEVREQVRQEQEAGEGPAPHREPAVKDPEGPPAKASKEAGPGAEAAEQSSTSGQGQPFVLPAGVSSRNEDYPRTCRLCFYGTGLIAGHGFTSPERTPGVFVLFDEDRFGFLWLELKSFSLYSRVQATFQNADAPSPQAFDEMLRNIQSLTS.

The interval 19-42 is disordered; sequence RQQRRGPAETAAADSEADTDPEEE. Serine 33 is modified (phosphoserine). The segment covering 33–42 has biased composition (acidic residues); the sequence is SEADTDPEEE. Residue threonine 37 is modified to Phosphothreonine. Residues 50–55 carry the D box motif; sequence RCSLLE. The region spanning 50 to 96 is the F-box domain; that stretch reads RCSLLELPPELLVEIFASLPGTDLPSLAQVCSRFRRILHTDTIWRRR. Zn(2+)-binding residues include cysteine 192, histidine 200, cysteine 216, and histidine 222. A Phosphoserine; by ATM modification is found at serine 264. A DDL motif motif is present at residues 283-285; sequence DDL. The interval 364–421 is disordered; the sequence is RQEQEAGEGPAPHREPAVKDPEGPPAKASKEAGPGAEAAEQSSTSGQGQPFVLPAGVS. Residues 374-385 show a composition bias toward basic and acidic residues; that stretch reads APHREPAVKDPE. Serine 448 carries the phosphoserine modification.

Belongs to the FBXO31 family. In terms of assembly, part of a SCF (SKP1-cullin-F-box) protein ligase complex SCF(FBXO31) composed of CUL1, SKP1, RBX1 and FBXO31. Interacts (when phosphorylated at Ser-33) with CDC20, promoting ubiquitination by the APC/C complex. Phosphorylation at Ser-264 by ATM following gamma-irradiation results in its stabilization. Phosphorylation at Ser-448 in absence of stress promotes its ubiquitination and degradation by the SCF(FBXO46) complex. Phosphorylation at Ser-33 by AKT1 promotes association with CDC20 and ubiquitination by the APC/C complex. Post-translationally, ubiquitinated by the SCF(FBXO46) complex in absence of stress, promoting its degradation. Ubiquitinated by the APC/C complex following phosphorylation at Ser-33, leading to its degradation by the proteasome.

The protein resides in the cytoplasm. The protein localises to the cytoskeleton. It is found in the microtubule organizing center. It localises to the centrosome. The protein operates within protein modification; protein ubiquitination. Functionally, substrate-recognition component of the SCF(FBXO31) protein ligase complex, which specifically mediates the ubiquitination of proteins amidated at their C-terminus in response to oxidative stress, leading to their degradation by the proteasome. FBXO31 specifically recognizes and binds C-terminal peptides bearing an amide: C-terminal amidation in response to oxidative stress takes place following protein fragmentation. The SCF(FBXO31) also plays a role in G1 arrest following DNA damage by mediating ubiquitination of phosphorylated cyclin-D1 (CCND1), promoting its degradation by the proteasome, resulting in G1 arrest. The SCF(FBXO31) complex is however not a major regulator of CCND1 stability during the G1/S transition. In response to genotoxic stress, the SCF(FBXO31) complex directs ubiquitination and degradation of phosphorylated MDM2, thereby promoting p53/TP53-mediated DNA damage response. SCF(FBXO31) complex is required for genomic integrity by catalyzing ubiquitination and degradation of cyclin-A (CCNA1 and/or CCNA2) during the G1 phase. In response to genotoxic stress, the SCF(FBXO31) complex directs ubiquitination and degradation of phosphorylated FBXO46 and MAP2K6. SCF(FBXO31) complex promotes ubiquitination and degradation of CDT1 during the G2 phase to prevent re-replication. The SCF(FBXO31) complex also mediates ubiquitination and degradation of DUSP6, OGT and PARD6A. In Rattus norvegicus (Rat), this protein is F-box only protein 31.